We begin with the raw amino-acid sequence, 192 residues long: Imidazoleglycerol-phosphate dehydratase (192 aa).

It belongs to the imidazoleglycerol-phosphate dehydratase family.

It localises to the cytoplasm. The catalysed reaction is D-erythro-1-(imidazol-4-yl)glycerol 3-phosphate = 3-(imidazol-4-yl)-2-oxopropyl phosphate + H2O. The protein operates within amino-acid biosynthesis; L-histidine biosynthesis; L-histidine from 5-phospho-alpha-D-ribose 1-diphosphate: step 6/9. In Hydrogenobaculum sp. (strain Y04AAS1), this protein is Imidazoleglycerol-phosphate dehydratase.